The following is an 87-amino-acid chain: Small ribosomal subunit protein uS17 (87 aa).

Belongs to the universal ribosomal protein uS17 family. Part of the 30S ribosomal subunit.

One of the primary rRNA binding proteins, it binds specifically to the 5'-end of 16S ribosomal RNA. In Macrococcus caseolyticus (strain JCSC5402) (Macrococcoides caseolyticum), this protein is Small ribosomal subunit protein uS17.